The following is a 2892-amino-acid chain: E3 ubiquitin-protein ligase lubel (2892 aa).

Disordered regions lie at residues 23–55, 125–252, 395–423, 483–631, 644–672, 685–737, 757–865, and 949–975; these read DRIG…KSTP, KQHM…QLEK, SQQH…QFGS, PSAA…ESEG, QKLQ…ENTQ, AHEE…PDHE, CCKT…DNSL, and DRFT…QQES. The span at 40-52 shows a compositional bias: low complexity; sequence GLPKAPALPPKAK. The span at 189-198 shows a compositional bias: gly residues; the sequence is GWRGSLGGGA. The span at 206 to 215 shows a compositional bias: polar residues; the sequence is ATSSANQMNN. Low complexity-rich tracts occupy residues 402–412 and 483–503; these read AQHPHQALPQH and PSAA…TPSR. Positions 516–528 are enriched in acidic residues; that stretch reads VDDELTDDEDSDQ. Residues 535-546 are compositionally biased toward polar residues; it reads VSNRSGMTSASR. Residues 547-560 show a composition bias toward basic residues; it reads SQHHQNHIQPRQRR. The segment covering 606–623 has biased composition (polar residues); it reads GTLTRNKTATDSARTSRI. The segment covering 647-670 has biased composition (basic and acidic residues); sequence QEADQHKSSKKAEPKRKPEMKDEN. A compositionally biased stretch (polar residues) spans 801 to 813; the sequence is KPTTKSQQPSQKS. 2 stretches are compositionally biased toward low complexity: residues 818-837 and 846-856; these read SKTT…AVNS and KTPSKSTLKTS. In terms of domain architecture, UBA-like 1 spans 1042–1187; the sequence is MHIILKELEL…LMRIWGSPNG (146 aa). Disordered regions lie at residues 1214–1252, 1477–1520, 1557–1653, 1717–2019, 2032–2082, 2191–2316, and 2411–2431; these read LQPP…SPYQ, LPTA…KLET, AEVQ…KILS, STTI…NLSE, RDEI…EGNT, SAPP…PLRS, and DYET…EPQK. Residues 1241-1252 show a composition bias toward polar residues; that stretch reads VKSTYATPSPYQ. A compositionally biased stretch (basic and acidic residues) spans 1510–1519; that stretch reads EELRQQEKLE. Residues 1560–1571 show a composition bias toward polar residues; sequence QVQSDDQPSTSR. Basic residues predominate over residues 1576–1587; it reads RAKRSQQSRKGR. A compositionally biased stretch (polar residues) spans 1595-1607; it reads PTNRTKLPNNIDQ. The span at 1608 to 1627 shows a compositional bias: basic and acidic residues; that stretch reads KVNESKTAAKETEAVKDKDL. 3 stretches are compositionally biased toward polar residues: residues 1630–1653, 1717–1726, and 1764–1779; these read AASN…KILS, STTISEQSEG, and KSPT…TSHI. A compositionally biased stretch (low complexity) spans 1822–1834; the sequence is LSSSSLRSESRSS. The span at 1859–1881 shows a compositional bias: polar residues; that stretch reads TVSSPKSEQLSDNQEVNLVSQET. Residues 1918-1927 show a composition bias toward acidic residues; the sequence is DSDEVFEDAP. Positions 1953-1963 are enriched in basic and acidic residues; sequence DGQRAETKSPE. Composition is skewed to acidic residues over residues 1964–1975 and 2036–2079; these read DEVVILLDEESQ and SMDE…DGEE. 2 stretches are compositionally biased toward low complexity: residues 2214–2230 and 2269–2291; these read PSEV…ALPI and SGTA…TVSK. Residues 2297–2308 show a composition bias toward polar residues; sequence NEPTNKSNSTPL. Residues 2411–2425 show a composition bias toward acidic residues; the sequence is DYETSATEEEQEEPN. Residues 2457 to 2513 form the UBA-like 2 domain; sequence DPAILARKYVDQELVTNIAEAQIAATLVSMKFSEDVALWAARECSDLDQAIAMLQQE. Positions 2510-2748 are TRIAD supradomain; it reads LQQECELCMN…LGLHAHHPRN (239 aa). 14 residues coordinate Zn(2+): C2514, C2517, C2537, C2540, C2618, C2621, C2636, C2639, C2644, C2647, H2655, C2660, C2690, and C2693. The RING-type 1 zinc-finger motif lies at 2514 to 2564; sequence CELCMNSYPMNQMVSMLKCLHKCCKQCAKSYFTVQITDRSINDCSCPFCKL. Residues 2514–2892 are necessary for linear polyubiquitination and sufficent for inducing DptA in the intestine; it reads CELCMNSYPM…IKKHIPLKSA (379 aa). The segment at 2601 to 2660 adopts an IBR-type zinc-finger fold; it reads QRKLRDRSLLQDPNFKWCIQCSSGFFARPKQKRLICPDCGSVTCAQCRKPWERQHEGSSC. Residues 2690-2720 form an RING-type 2; atypical zinc finger; it reads CPKCKFRYSLARGGCMHFTCTQCKFEFCYGC. C2704 is an active-site residue. Zn(2+)-binding residues include C2709 and C2712.

It belongs to the RBR family.

It carries out the reaction [E2 ubiquitin-conjugating enzyme]-S-ubiquitinyl-L-cysteine + [acceptor protein]-L-lysine = [E2 ubiquitin-conjugating enzyme]-L-cysteine + [acceptor protein]-N(6)-ubiquitinyl-L-lysine.. In terms of biological role, E3 ubiquitin-protein ligase which conjugates linear 'Met-1'- and 'Lys-63'-linked polyubiquitin chains to substrates and plays a crucial role in the NF-kappa-B intestinal inflammatory response to oral infection and in the heat stress response. Preferentially interacts with 'Lys-63'-linked, and to a lesser extent 'Lys-48'-linked, polyubiquitin chains. Upon oral infection with a Gram-negative bacterium E.carotovora subsp. carotovora 15, functions with the E2 ubiquitin-conjugating enzyme Ubc10 to mediate the conjugation of 'Lys-63'- and linear 'Met-1'-linked polyubiquitin chains to the substrate key which is essential for activation of the NF-kappa-B signaling cascade in the adult intestinal epithelium. It is not required for systemic immune response to septic infection with either E.carotovora subsp. carotovora 15 or Gram-positive M.luteus bacteria. Function in controlling linear ubiquitination is also essential for regulating the heat stress response in adults. This function may require the E2 ubiquitin-conjugating enzymes Ubc10 or eff. In Drosophila melanogaster (Fruit fly), this protein is E3 ubiquitin-protein ligase lubel.